Reading from the N-terminus, the 290-residue chain is 33 kDa chaperonin (290 aa).

2 disulfides stabilise this stretch: Cys-235-Cys-237 and Cys-268-Cys-271.

Belongs to the HSP33 family. Under oxidizing conditions two disulfide bonds are formed involving the reactive cysteines. Under reducing conditions zinc is bound to the reactive cysteines and the protein is inactive.

The protein resides in the cytoplasm. Redox regulated molecular chaperone. Protects both thermally unfolding and oxidatively damaged proteins from irreversible aggregation. Plays an important role in the bacterial defense system toward oxidative stress. The protein is 33 kDa chaperonin of Streptococcus pyogenes serotype M12 (strain MGAS2096).